Consider the following 34-residue polypeptide: Photosystem I reaction center subunit XII (34 aa).

A helical transmembrane segment spans residues 4–24; that stretch reads VLSAPEVFIALVVAAHAAVLA.

It belongs to the PsaM family.

It is found in the cellular thylakoid membrane. This is Photosystem I reaction center subunit XII from Synechococcus sp. (strain CC9605).